The following is a 501-amino-acid chain: Serine/threonine protein phosphatase 2A 55 kDa regulatory subunit B beta isoform (501 aa).

N-acetylmethionine is present on methionine 1. WD repeat units follow at residues 34 to 73 (QEVDIISAIEFDKSGDHLATGDRGGRVVLFERTDTKDHGG), 110 to 151 (EIEE…IKKI), 220 to 258 (AHDYHINSISNSSDGETFISADDLRVNLWNLEISNQSFN), 269 to 309 (DLTE…LCDS), and 328 to 366 (EIIASISDIKFSKDGRYILSRDYMTLKLWDINMDSGPVA). The segment covering 439 to 449 (TPARPSRSIGS) has biased composition (polar residues). Residues 439 to 466 (TPARPSRSIGSMTRVVRRGSESPGTEAN) are disordered. The stretch at 471 to 501 (DFTTKLLHMAWHPTENSIACAAANSLYMYYA) is one WD 6 repeat.

This sequence belongs to the phosphatase 2A regulatory subunit B family. PP2A consists of a common heteromeric enzyme, composed of a catalytic subunit (subunits C), a constant regulatory subunit (subunit A), and a variety of regulatory subunits such as subunits B (the R2/B/PR55/B55, R3/B''/PR72/PR130/PR59 and R5/B'/B56 families). Interacts with SIC/RON3. In terms of tissue distribution, expressed ubiquitously.

Its function is as follows. The B regulatory subunit may modulate substrate selectivity and catalytic activity, and may also direct the localization of the catalytic enzyme to a particular subcellular compartment. This Arabidopsis thaliana (Mouse-ear cress) protein is Serine/threonine protein phosphatase 2A 55 kDa regulatory subunit B beta isoform (PP2AB2).